Consider the following 572-residue polypeptide: MKDNQQAVQLQQPTTIGHYLAVRLAQAGVKHHFVVPGDYNLGLLDKLQYNNYLEEVNCANELNCAFAAEGYARANGIAACVVTYSVGAFTAFDGIGGAYAEDLPVILISGSPNTNDIGSSHLLHHTLGTHDFSYQYEMAKKITCAAVSIQRPTEAPRLIDYAIKMALLKKKPVYIEVPTNVASQPCAAPGPASLITEPETSNQEYLQMAVDISAKIVNGKQKPVLLAGPKLRSFKAESAFLELANSLNCSVAVMPNAKSFFPESHPNYAGIYWGQASTLGAESIINWSDCIICAGTTFTDYSSNGWTSLPPKANVLHVDVDRVTVSDAEFGGVLLRDFLHELAKKVKANNASVVEYKRIRPESLEIPMENPKAALNRKEIIRQVQNLVNQETTLFVDTGDSWFGGMRITLPEKARFEIEMQWGHIGWSVPSAFGYAIGAPKRNVVVFVGDGSFQETVQEVSQMVRLNLPIIMFLINNRGYTIEVEIHDGPYNRIKNWDYAAIVEAFNAGEGHAKGFRVGNGHELAEAIRQAKENSQGPTLIECNIDQDDCSKELINWGHNVGAANGKPPAKE.

Aspartate 38 and histidine 125 together coordinate substrate. Positions 400 to 482 are thiamine pyrophosphate binding; that stretch reads DSWFGGMRIT…FLINNRGYTI (83 aa). Aspartate 450, asparagine 477, and glycine 479 together coordinate Mg(2+). Glutamate 483 provides a ligand contact to substrate.

The protein belongs to the TPP enzyme family. Homotetramer. A metal cation serves as cofactor. Thiamine diphosphate is required as a cofactor.

The catalysed reaction is a 2-oxocarboxylate + H(+) = an aldehyde + CO2. The protein is Probable pyruvate decarboxylase C186.09 of Schizosaccharomyces pombe (strain 972 / ATCC 24843) (Fission yeast).